Consider the following 82-residue polypeptide: Cytochrome b559 subunit alpha (82 aa).

The helical transmembrane segment at 22 to 36 (VIHSITIPALFIAGW) threads the bilayer. His-24 contributes to the heme binding site.

It belongs to the PsbE/PsbF family. Heterodimer of an alpha subunit and a beta subunit. PSII is composed of 1 copy each of membrane proteins PsbA, PsbB, PsbC, PsbD, PsbE, PsbF, PsbH, PsbI, PsbJ, PsbK, PsbL, PsbM, PsbT, PsbX, PsbY, PsbZ, Psb30/Ycf12, peripheral proteins PsbO, CyanoQ (PsbQ), PsbU, PsbV and a large number of cofactors. It forms dimeric complexes. Heme b serves as cofactor.

It is found in the cellular thylakoid membrane. This b-type cytochrome is tightly associated with the reaction center of photosystem II (PSII). PSII is a light-driven water:plastoquinone oxidoreductase that uses light energy to abstract electrons from H(2)O, generating O(2) and a proton gradient subsequently used for ATP formation. It consists of a core antenna complex that captures photons, and an electron transfer chain that converts photonic excitation into a charge separation. The polypeptide is Cytochrome b559 subunit alpha (Trichodesmium erythraeum (strain IMS101)).